The primary structure comprises 79 residues: Protein GOLVEN 2 (79 aa).

The signal sequence occupies residues 1-26 (MAIRVSHKSFLVALLLILFISSPTQA). The propeptide occupies 27-65 (RSLREVVRNRTLLVVEKSQESRKIRHEGGGSDVDGLMDM). A disordered region spans residues 49 to 79 (KIRHEGGGSDVDGLMDMDYNSANKKRPIHNR). Position 67 is a sulfotyrosine (Y67). At P75 the chain carries Hydroxyproline.

The protein belongs to the RGF family. In terms of assembly, binds to LRR receptor-like serine/threonine-protein kinases to trigger their dimerization with SERK proteins and subsequent signaling. As to expression, expressed in siliques, stems, hypocotyls, shoot apex, leaves, flowers and cotyledons, and, to a lower extent, in roots.

The protein localises to the secreted. Its subcellular location is the endoplasmic reticulum. In terms of biological role, signaling peptide (root growth factor) that regulates the pattern of root growth and lateral root development by modulating the length and the number of cortical cells in the root apical meristem (RAM), and the anticlinal asymmetric cell divisions in lateral root initiation cells. Also involved in the regulation of hypocotyl bending and root gravitropism, probably by influencing the formation of auxin gradients. Maintains the postembryonic root stem cell niche. The chain is Protein GOLVEN 2 from Arabidopsis thaliana (Mouse-ear cress).